Consider the following 143-residue polypeptide: Large ribosomal subunit protein bL17 (143 aa).

Residues 124–133 show a composition bias toward basic and acidic residues; the sequence is GAGDRARLEA. A disordered region spans residues 124–143; that stretch reads GAGDRARLEAEGTDAEAAAA.

The protein belongs to the bacterial ribosomal protein bL17 family. In terms of assembly, part of the 50S ribosomal subunit. Contacts protein L32.

In Mesorhizobium japonicum (strain LMG 29417 / CECT 9101 / MAFF 303099) (Mesorhizobium loti (strain MAFF 303099)), this protein is Large ribosomal subunit protein bL17.